A 152-amino-acid chain; its full sequence is uncharacterized protein (152 aa).

This is an uncharacterized protein from Acheta domesticus (House cricket).